Here is a 619-residue protein sequence, read N- to C-terminus: Cationic amino acid transporter 3 (619 aa).

Topologically, residues 1 to 36 (MPWQAFRRFGQKLVRRRTLESGMAETRLARCLSTLD) are cytoplasmic. Residues 37 to 57 (LVALGVGSTLGAGVYVLAGEV) form a helical membrane-spanning segment. The Extracellular segment spans residues 58-61 (AKDK). Residues 62-82 (AGPSIVICFLVAALSSVLAGL) traverse the membrane as a helical segment. Topologically, residues 83 to 107 (CYAEFGARVPRSGSAYLYSYVTVGE) are cytoplasmic. Residues 108-128 (LWAFTTGWNLILSYVIGTASV) traverse the membrane as a helical segment. Residues 129 to 162 (ARAWSSAFDNLIGNHISKTLQGSIALHVPHVLAE) are Extracellular-facing. A helical membrane pass occupies residues 163–183 (YPDFFALGLVLLLTGLLALGA). Residues 184-191 (SESALVTK) lie on the Cytoplasmic side of the membrane. Residues 192-212 (VFTGVNLLVLGFVMISGFVKG) form a helical membrane-spanning segment. Residues 213 to 233 (DVHNWKLTEEDYELAMAELND) are Extracellular-facing. Asn-232 carries N-linked (GlcNAc...) asparagine glycosylation. Residues 234 to 254 (TYSLGPLGSGGFVPFGFEGIL) form a helical membrane-spanning segment. At 255-285 (RGAATCFYAFVGFDCIATTGEEAQNPQRSIP) the chain is on the cytoplasmic side. The helical transmembrane segment at 286-306 (MGIVISLSVCFLAYFAVSSAL) threads the bilayer. At 307-335 (TLMMPYYQLQPESPLPEAFLYIGWAPARY) the chain is on the extracellular side. A helical membrane pass occupies residues 336–356 (VVAVGSLCALSTSLLGSMFPM). Residues 357–382 (PRVIYAMAEDGLLFRVLARIHTGTRT) are Cytoplasmic-facing. Residues 383–403 (PIIATVVSGIIAAFMAFLFKL) traverse the membrane as a helical segment. Topologically, residues 404 to 406 (TDL) are extracellular. Residues 407 to 427 (VDLMSIGTLLAYSLVSICVLI) form a helical membrane-spanning segment. Residues 428-475 (LRYQPDQETKTGEEVELQEEAITTESEKLTLWGLFFPLNSIPTPLSGQ) lie on the Cytoplasmic side of the membrane. A helical membrane pass occupies residues 476 to 496 (IVYVCSSLLAVLLTALCLVLA). Over 497–506 (QWSVPLLSGD) the chain is Extracellular. The chain crosses the membrane as a helical span at residues 507-527 (LLWTAVVVLLLLLIIGIIVVI). Topologically, residues 528 to 540 (WRQPQSSTPLHFK) are cytoplasmic. A helical transmembrane segment spans residues 541 to 561 (VPALPLLPLMSIFVNIYLMMQ). Residues 562 to 569 (MTAGTWAR) lie on the Extracellular side of the membrane. The helical transmembrane segment at 570–590 (FGVWMLIGFAIYFGYGIQHSL) threads the bilayer. Residues 591–619 (EEIKSNQPSRKSRAKTVDLDPGTLYVHSV) lie on the Cytoplasmic side of the membrane. Thr-606 bears the Phosphothreonine mark. Ser-618 is subject to Phosphoserine.

It belongs to the amino acid-polyamine-organocation (APC) superfamily. Cationic amino acid transporter (CAT) (TC 2.A.3.3) family. Post-translationally, N-glycosylated. As to expression, highly expressed in thymus, uterus and testis. Detected at lower levels in brain, mammary gland, prostate, salivary gland and fetal spleen. In brain, highest expression in thalamus, hippocampus and amygdala.

It is found in the cell membrane. The catalysed reaction is L-arginine(in) = L-arginine(out). The enzyme catalyses L-lysine(in) = L-lysine(out). It carries out the reaction L-ornithine(in) = L-ornithine(out). Functionally, uniporter that mediates the uptake of cationic L-amino acids such as L-arginine, L-lysine and L-ornithine. The transport is sodium ions- and pH-independent, moderately trans-stimulated and is mediated by passive diffusion. The protein is Cationic amino acid transporter 3 of Homo sapiens (Human).